A 234-amino-acid polypeptide reads, in one-letter code: Glycoprotein BDLF3 (234 aa).

An N-terminal signal peptide occupies residues 1–28 (MAHARDKAGAVMAMILICETSLIWTSSG). Positions 29–62 (SSTASAGNVTGTTAVTTPSPSASGPSTNQSTTLT) are disordered. Asn-36, Asn-56, Asn-77, Asn-96, Asn-101, Asn-110, Asn-127, Asn-144, and Asn-159 each carry an N-linked (GlcNAc...) asparagine; by host glycan. The interval 116 to 138 (AGTGTSTGVTSNVTTRSSSTTSA) is disordered. Residues 187-207 (LVFVGLTFLMLILIFAAGLMM) traverse the membrane as a helical segment.

Belongs to the Epstein-Barr virus BDLF3 protein family.

Its subcellular location is the membrane. The protein is Glycoprotein BDLF3 of Homo sapiens (Human).